The primary structure comprises 332 residues: MSFSERLLAAWYRGHPALALLRPLEALYRRVVNARRADFLSGRKPAYRAPVPVVVVGNITVGGTGKTPMILWMVEHCRARGLRVGVISRGYGARPPHAPWRVRPEQDAAQAGDEPLMIVRRSGVPLMIDPDRPRALRALLAEEPLDLVLCDDGLQHYRLARDLELVLIDAARGLGNGRCLPAGPLREPRERLESVDALLYNGADEDPEDGFAFRLRPAALVNLQSGERRALGYFPAGQMLHAVAGIGNPQRFFGTLEALHWRPIPHAFPDHATYSATELTFDPPLPLLMTEKDAVKCRAFAAADWWYLAVDAVPSPAFVAWFDARLEHLLAR.

60-67 contacts ATP; the sequence is TVGGTGKT.

It belongs to the LpxK family.

It catalyses the reaction a lipid A disaccharide + ATP = a lipid IVA + ADP + H(+). It participates in glycolipid biosynthesis; lipid IV(A) biosynthesis; lipid IV(A) from (3R)-3-hydroxytetradecanoyl-[acyl-carrier-protein] and UDP-N-acetyl-alpha-D-glucosamine: step 6/6. Its function is as follows. Transfers the gamma-phosphate of ATP to the 4'-position of a tetraacyldisaccharide 1-phosphate intermediate (termed DS-1-P) to form tetraacyldisaccharide 1,4'-bis-phosphate (lipid IVA). This is Tetraacyldisaccharide 4'-kinase from Pseudomonas paraeruginosa (strain DSM 24068 / PA7) (Pseudomonas aeruginosa (strain PA7)).